The primary structure comprises 407 residues: V-set and immunoglobulin domain-containing protein 1 (407 aa).

The first 22 residues, M1–M22, serve as a signal peptide directing secretion. In terms of domain architecture, Ig-like V-type spans V23–L134. Over V23–E234 the chain is Extracellular. N39 carries N-linked (GlcNAc...) asparagine glycosylation. 2 cysteine pairs are disulfide-bonded: C44/C118 and C163/C213. The region spanning P145–T229 is the Ig-like C2-type domain. 2 N-linked (GlcNAc...) asparagine glycosylation sites follow: N202 and N221. The helical transmembrane segment at V235–V255 threads the bilayer. Residues V256–A407 are Cytoplasmic-facing. 2 disordered regions span residues Q268–S289 and T318–A407. Residues S273 and S274 each carry the phosphoserine modification. Positions D361–E371 are enriched in acidic residues.

Its subcellular location is the membrane. This chain is V-set and immunoglobulin domain-containing protein 1 (Vsig1), found in Mus musculus (Mouse).